We begin with the raw amino-acid sequence, 859 residues long: Rod cGMP-specific 3',5'-cyclic phosphodiesterase subunit alpha (859 aa).

The residue at position 2 (G2) is an N-acetylglycine. GAF domains are found at residues 73-222 (QAEK…NLIM) and 254-431 (DIER…GWSV). The PDEase domain maps to 483–816 (EEEELAEILQ…KEWKALADEY (334 aa)). H559 acts as the Proton donor in catalysis. Residues H563, H599, D600, and D720 each coordinate a divalent metal cation. The interval 823–859 (LEEEKQKQQAAKQAASGNQPGGNPLQGAPASKSCCIQ) is disordered. C856 carries the cysteine methyl ester modification. C856 carries the S-farnesyl cysteine lipid modification. A propeptide spans 857–859 (CIQ) (removed in mature form).

The protein belongs to the cyclic nucleotide phosphodiesterase family. Oligomer composed of two catalytic chains (alpha and beta), an inhibitory chain (gamma) and the delta chain. A divalent metal cation serves as cofactor.

The protein localises to the cell membrane. It is found in the cell projection. Its subcellular location is the cilium. It localises to the photoreceptor outer segment. The enzyme catalyses 3',5'-cyclic GMP + H2O = GMP + H(+). Rod-specific cGMP phosphodiesterase that catalyzes the hydrolysis of 3',5'-cyclic GMP. This protein participates in processes of transmission and amplification of the visual signal. In Mus musculus (Mouse), this protein is Rod cGMP-specific 3',5'-cyclic phosphodiesterase subunit alpha.